The sequence spans 320 residues: ATP-dependent 6-phosphofructokinase (320 aa).

Glycine 12 is an ATP binding site. ADP contacts are provided by residues 22 to 26 (RGVVR) and 55 to 60 (RYSVSD). ATP contacts are provided by residues 73-74 (RF) and 103-106 (GDGS). Aspartate 104 contacts Mg(2+). Position 126 to 128 (126 to 128 (TID)) interacts with substrate. Aspartate 128 acts as the Proton acceptor in catalysis. Position 155 (arginine 155) interacts with ADP. Substrate contacts are provided by residues arginine 163 and 170-172 (MGR). ADP contacts are provided by residues 186–188 (GCE), lysine 212, and 214–216 (KKH). Residues glutamate 223, arginine 244, and 250–253 (HIQR) each bind substrate.

This sequence belongs to the phosphofructokinase type A (PFKA) family. ATP-dependent PFK group I subfamily. Prokaryotic clade 'B1' sub-subfamily. In terms of assembly, homotetramer. It depends on Mg(2+) as a cofactor.

It localises to the cytoplasm. The catalysed reaction is beta-D-fructose 6-phosphate + ATP = beta-D-fructose 1,6-bisphosphate + ADP + H(+). Its pathway is carbohydrate degradation; glycolysis; D-glyceraldehyde 3-phosphate and glycerone phosphate from D-glucose: step 3/4. Allosterically activated by ADP and other diphosphonucleosides, and allosterically inhibited by phosphoenolpyruvate. Its function is as follows. Catalyzes the phosphorylation of D-fructose 6-phosphate to fructose 1,6-bisphosphate by ATP, the first committing step of glycolysis. The chain is ATP-dependent 6-phosphofructokinase from Sodalis glossinidius (strain morsitans).